Consider the following 590-residue polypeptide: Conglutin beta 4 (590 aa).

The first 30 residues, 1 to 30, serve as a signal peptide directing secretion; the sequence is MIKMRVRFPTLVLLLGIVFLMAVSIGIAYG. The segment covering 38-105 has biased composition (basic and acidic residues); that stretch reads HERPQEREQE…REPRREREQE (68 aa). A disordered region spans residues 38–175; it reads HERPQEREQE…DSRRQRNPYY (138 aa). Positions 137 to 146 are enriched in low complexity; that stretch reads QGSSSSSRRQ. Positions 174 to 332 constitute a Cupin type-1 1 domain; the sequence is YYFSSERFQT…TFNTRYEEIQ (159 aa). Residue N239 is glycosylated (N-linked (GlcNAc...) asparagine). Disordered regions lie at residues 340 to 362 and 374 to 396; these read DEQEDDEQRHGQEQSHQDEGVIV and KYAQSSSRKGKPSKSGPFNLRSN. Residues 346–362 are compositionally biased toward basic and acidic residues; sequence EQRHGQEQSHQDEGVIV. Residues 391–548 form the Cupin type-1 2 domain; it reads FNLRSNKPIY…TFPGSTEDVE (158 aa). An N-linked (GlcNAc...) asparagine glycan is attached at N498. Positions 559–579 are disordered; it reads FANAQPQQQQQREREGRRGRR.

Belongs to the 7S seed storage protein family. Component of globulins complexes which accumulate in seeds.

Its function is as follows. Seed storage protein. Accumulates during seed development and is hydrolyzed after germination to provide a carbon and nitrogen source for the developing seedling. The sequence is that of Conglutin beta 4 from Lupinus angustifolius (Narrow-leaved blue lupine).